A 351-amino-acid polypeptide reads, in one-letter code: Dihydroorotate dehydrogenase (quinone) (351 aa).

FMN contacts are provided by residues 67-71 and threonine 91; that span reads AGFDK. Residue lysine 71 coordinates substrate. 116–120 lines the substrate pocket; the sequence is NAMGF. 2 residues coordinate FMN: asparagine 145 and asparagine 178. Substrate is bound at residue asparagine 178. Serine 181 acts as the Nucleophile in catalysis. Substrate is bound at residue asparagine 183. Residues lysine 214 and threonine 242 each contribute to the FMN site. 243-244 contacts substrate; it reads NT. Residues glycine 262, glycine 291, and 312–313 contribute to the FMN site; that span reads YS.

The protein belongs to the dihydroorotate dehydrogenase family. Type 2 subfamily. As to quaternary structure, monomer. It depends on FMN as a cofactor.

Its subcellular location is the cell membrane. It catalyses the reaction (S)-dihydroorotate + a quinone = orotate + a quinol. It functions in the pathway pyrimidine metabolism; UMP biosynthesis via de novo pathway; orotate from (S)-dihydroorotate (quinone route): step 1/1. Its function is as follows. Catalyzes the conversion of dihydroorotate to orotate with quinone as electron acceptor. This Helicobacter acinonychis (strain Sheeba) protein is Dihydroorotate dehydrogenase (quinone).